Reading from the N-terminus, the 353-residue chain is Pleckstrin-2 (353 aa).

Met1 carries the N-acetylmethionine modification. Positions 4–104 constitute a PH 1 domain; it reads GVLKEGFLVK…WAFEITGAIH (101 aa). Ser120 bears the Phosphoserine mark. A DEP domain is found at 139–225; it reads TSTGIRPSPN…DSTALYTFAE (87 aa). A PH 2 domain is found at 247–353; the sequence is TVVKQGYLSK…EWIEAIKKLT (107 aa).

As to expression, ubiquitous. Most abundant in the thymus, large bowel, small bowel, stomach, and prostate.

It is found in the cell projection. The protein resides in the lamellipodium membrane. It localises to the cytoplasm. The protein localises to the cytoskeleton. Its function is as follows. May help orchestrate cytoskeletal arrangement. Contribute to lamellipodia formation. Overexpression of pleckstrin 2 causes large lamellipodia and peripheral ruffle formation. This chain is Pleckstrin-2 (Plek2), found in Mus musculus (Mouse).